We begin with the raw amino-acid sequence, 276 residues long: Large ribosomal subunit protein uL2 (276 aa).

Residues 224–276 (VMNPVDHPHGGGEGKAPIGRKSPMTPWGKPTLGYKTRKKKNKSDKFIIRRRKK) are disordered. The segment covering 258 to 276 (KTRKKKNKSDKFIIRRRKK) has biased composition (basic residues).

This sequence belongs to the universal ribosomal protein uL2 family. As to quaternary structure, part of the 50S ribosomal subunit. Forms a bridge to the 30S subunit in the 70S ribosome.

Functionally, one of the primary rRNA binding proteins. Required for association of the 30S and 50S subunits to form the 70S ribosome, for tRNA binding and peptide bond formation. It has been suggested to have peptidyltransferase activity; this is somewhat controversial. Makes several contacts with the 16S rRNA in the 70S ribosome. In Geobacillus stearothermophilus (Bacillus stearothermophilus), this protein is Large ribosomal subunit protein uL2.